The sequence spans 571 residues: Phosphatidylinositol-3,5-bisphosphate 3-phosphatase MTMR2 (571 aa).

In terms of domain architecture, GRAM spans 1 to 67; sequence MEEPPLLPGE…GVINRVEKIG (67 aa). The Myotubularin phosphatase domain occupies 133-508; it reads GWKVYDPIWE…RHLELWVGYY (376 aa). The a 1,2-diacyl-sn-glycero-3-phospho-(1D-myo-inositol-3,5-bisphosphate) site is built by Asn-258, Asn-283, and Ile-284. Residues Asn-258, Asn-283, and Ile-284 each coordinate a 1,2-diacyl-sn-glycero-3-phospho-(1D-myo-inositol-3-phosphate). Cys-345 serves as the catalytic Phosphocysteine intermediate. A 1,2-diacyl-sn-glycero-3-phospho-(1D-myo-inositol-3,5-bisphosphate) is bound by residues Ser-346, Asp-347, Gly-348, Trp-349, Asp-350, Arg-351, Arg-387, and Arg-391. Residues Ser-346, Asp-347, Gly-348, Trp-349, Asp-350, and Arg-351 each contribute to the a 1,2-diacyl-sn-glycero-3-phospho-(1D-myo-inositol-3-phosphate) site. Arg-391 contributes to the a 1,2-diacyl-sn-glycero-3-phospho-(1D-myo-inositol-3-phosphate) binding site. Residues 521 to 553 adopt a coiled-coil conformation; that stretch reads VHNRYKELLAKRAELQKKVEELQREITNRSTSS. The tract at residues 544-571 is disordered; the sequence is REITNRSTSSSERAGSPAQCVTPVQTVV.

It belongs to the protein-tyrosine phosphatase family. Non-receptor class myotubularin subfamily. As to quaternary structure, homooligomer and heterooligomer.

The protein resides in the cytoplasm. It localises to the early endosome membrane. The enzyme catalyses a 1,2-diacyl-sn-glycero-3-phospho-(1D-myo-inositol-3,5-bisphosphate) + H2O = a 1,2-diacyl-sn-glycero-3-phospho-(1D-myo-inositol-5-phosphate) + phosphate. It carries out the reaction a 1,2-diacyl-sn-glycero-3-phospho-(1D-myo-inositol-3-phosphate) + H2O = a 1,2-diacyl-sn-glycero-3-phospho-(1D-myo-inositol) + phosphate. The catalysed reaction is 1,2-dioctanoyl-sn-glycero-3-phospho-(1-D-myo-inositol-3-phosphate) + H2O = 1,2-dioctanoyl-sn-glycero-3-phospho-(1D-myo-inositol) + phosphate. It catalyses the reaction 1,2-dioctanoyl-sn-glycero-3-phospho-(1D-myo-inositol-3,5-bisphosphate) + H2O = 1,2-dioctanoyl-sn-glycero-3-phospho-(1D-myo-inositol-5-phosphate) + phosphate. Lipid phosphatase that specifically dephosphorylates the D-3 position of phosphatidylinositol 3-phosphate and phosphatidylinositol 3,5-bisphosphate, generating phosphatidylinositol and phosphatidylinositol 5-phosphate. Regulates the level of these phosphoinositides critical for various biological processes including autophagy initiation and autophagosome maturation. In Gallus gallus (Chicken), this protein is Phosphatidylinositol-3,5-bisphosphate 3-phosphatase MTMR2.